The following is a 167-amino-acid chain: Bacterial non-heme ferritin (167 aa).

The 144-residue stretch at 2 to 145 (LNKELLDALN…THIDYLNRIG (144 aa)) folds into the Ferritin-like diiron domain. Glu-17, Glu-50, His-53, Glu-94, and Gln-127 together coordinate Fe cation.

It belongs to the ferritin family. Prokaryotic subfamily.

Its subcellular location is the cytoplasm. It catalyses the reaction 4 Fe(2+) + O2 + 6 H2O = 4 iron(III) oxide-hydroxide + 12 H(+). Its function is as follows. Iron-storage protein. In Staphylococcus saprophyticus subsp. saprophyticus (strain ATCC 15305 / DSM 20229 / NCIMB 8711 / NCTC 7292 / S-41), this protein is Bacterial non-heme ferritin (ftnA).